Consider the following 387-residue polypeptide: Polyadenylate-binding protein RBP45A (387 aa).

RRM domains lie at 60 to 140 (KSLW…WAQA), 154 to 233 (HTIF…PAAN), and 260 to 332 (TTIF…WGRS). Polar residues predominate over residues 329-342 (WGRSPNKQSDQAQW). A disordered region spans residues 329 to 387 (WGRSPNKQSDQAQWNGGGYYGYPPQPQGGYGYAAQPPTQDPNAYYGGYTGYGNYQQQRQ).

Belongs to the polyadenylate-binding RBP45 family. Interacts with the poly(A) tail of mRNA in nucleus. Mostly expressed in seedlings, and, to a lower extent, in leaves, stems, and flowers. Present in immature anther tissues (tapetum cells) and mature pollen grains.

The protein resides in the nucleus. Functionally, heterogeneous nuclear ribonucleoprotein (hnRNP)-protein binding the poly(A) tail of mRNA and probably involved in some steps of pre-mRNA maturation. The sequence is that of Polyadenylate-binding protein RBP45A (RBP45A) from Arabidopsis thaliana (Mouse-ear cress).